Here is a 104-residue protein sequence, read N- to C-terminus: MAAKIRREDEVVVLAGKDKGKRAKVSQVLPTGKLIVEGVNLVKKHQKPNPQLGVAGGIVEQEAPIQASNVAIFNSATGKADRVGFRLEDGKKVRFFKSNSELVK.

It belongs to the universal ribosomal protein uL24 family. As to quaternary structure, part of the 50S ribosomal subunit.

In terms of biological role, one of two assembly initiator proteins, it binds directly to the 5'-end of the 23S rRNA, where it nucleates assembly of the 50S subunit. Functionally, one of the proteins that surrounds the polypeptide exit tunnel on the outside of the subunit. The polypeptide is Large ribosomal subunit protein uL24 (Shewanella woodyi (strain ATCC 51908 / MS32)).